The sequence spans 115 residues: uncharacterized protein (115 aa).

Positions glycine 63–glycine 108 constitute a CHCH domain. 2 consecutive short sequence motifs (cx9C motif) follow at residues cysteine 66–cysteine 76 and cysteine 90–cysteine 100. Intrachain disulfides connect cysteine 66-cysteine 100 and cysteine 76-cysteine 90.

This is an uncharacterized protein from Caenorhabditis elegans.